The chain runs to 377 residues: RIB43A-like with coiled-coils protein 2 (377 aa).

A coiled-coil region spans residues 188–238 (ELKFDEAARDLQRLEITTRKAVCAAVKEFNKKQVVELAERKRQVKQQEQED). The tract at residues 355–377 (QLDAAPSSQPTEDYFSQFNTRSR) is disordered. Over residues 360 to 377 (PSSQPTEDYFSQFNTRSR) the composition is skewed to polar residues.

Belongs to the RIB43A family. Microtubule inner protein component of sperm flagellar doublet microtubules.

It is found in the cytoplasm. The protein resides in the cytoskeleton. The protein localises to the cilium axoneme. Its subcellular location is the flagellum axoneme. Microtubule inner protein (MIP) part of the dynein-decorated doublet microtubules (DMTs) in cilia axoneme, which is required for motile cilia beating. The polypeptide is RIB43A-like with coiled-coils protein 2 (Rattus norvegicus (Rat)).